Here is a 329-residue protein sequence, read N- to C-terminus: UDP-glucose 4-epimerase (329 aa).

NAD(+) is bound by residues 13 to 14 (YV), 33 to 38 (HNLSTG), 53 to 54 (DI), 76 to 80 (FAAFS), asparagine 95, threonine 120, tyrosine 144, lysine 148, and phenylalanine 172. The substrate site is built by threonine 120 and tyrosine 144. Tyrosine 144 serves as the catalytic Proton acceptor. Residues asparagine 173, 190–191 (HL), 207–209 (SVY), arginine 221, and 281–284 (RGRD) each bind substrate.

The protein belongs to the NAD(P)-dependent epimerase/dehydratase family. As to quaternary structure, homodimer. NAD(+) is required as a cofactor.

It carries out the reaction UDP-alpha-D-glucose = UDP-alpha-D-galactose. It participates in carbohydrate metabolism; galactose metabolism. Functionally, involved in the metabolism of galactose. Catalyzes the conversion of UDP-galactose (UDP-Gal) to UDP-glucose (UDP-Glc) through a mechanism involving the transient reduction of NAD. The polypeptide is UDP-glucose 4-epimerase (galE) (Streptomyces lividans).